A 264-amino-acid chain; its full sequence is Proteasome assembly chaperone 2 (264 aa).

The residue at position 137 (Thr-137) is a Phosphothreonine.

The protein belongs to the PSMG2 family. As to quaternary structure, forms a heterodimer with PSMG1. The PSMG1-PSMG2 heterodimer interacts directly with the PSMA5 and PSMA7 proteasome alpha subunits. Degraded by the proteasome upon completion of 20S proteasome maturation.

It localises to the nucleus. In terms of biological role, chaperone protein which promotes assembly of the 20S proteasome as part of a heterodimer with PSMG1. The PSMG1-PSMG2 heterodimer binds to the PSMA5 and PSMA7 proteasome subunits, promotes assembly of the proteasome alpha subunits into the heteroheptameric alpha ring and prevents alpha ring dimerization. The sequence is that of Proteasome assembly chaperone 2 from Mus musculus (Mouse).